A 153-amino-acid polypeptide reads, in one-letter code: 6,7-dimethyl-8-ribityllumazine synthase (153 aa).

Residues F22, 56 to 58, and 80 to 82 contribute to the 5-amino-6-(D-ribitylamino)uracil site; these read AFE and AVI. 85-86 contributes to the (2S)-2-hydroxy-3-oxobutyl phosphate binding site; that stretch reads AT. The active-site Proton donor is H88. Position 113 (F113) interacts with 5-amino-6-(D-ribitylamino)uracil. R127 contacts (2S)-2-hydroxy-3-oxobutyl phosphate.

It belongs to the DMRL synthase family.

The enzyme catalyses (2S)-2-hydroxy-3-oxobutyl phosphate + 5-amino-6-(D-ribitylamino)uracil = 6,7-dimethyl-8-(1-D-ribityl)lumazine + phosphate + 2 H2O + H(+). The protein operates within cofactor biosynthesis; riboflavin biosynthesis; riboflavin from 2-hydroxy-3-oxobutyl phosphate and 5-amino-6-(D-ribitylamino)uracil: step 1/2. Its function is as follows. Catalyzes the formation of 6,7-dimethyl-8-ribityllumazine by condensation of 5-amino-6-(D-ribitylamino)uracil with 3,4-dihydroxy-2-butanone 4-phosphate. This is the penultimate step in the biosynthesis of riboflavin. The protein is 6,7-dimethyl-8-ribityllumazine synthase of Alkaliphilus metalliredigens (strain QYMF).